The following is a 90-amino-acid chain: UPF0223 protein lmo1058 (90 aa).

It belongs to the UPF0223 family.

This chain is UPF0223 protein lmo1058, found in Listeria monocytogenes serovar 1/2a (strain ATCC BAA-679 / EGD-e).